Reading from the N-terminus, the 180-residue chain is Shikimate kinase (180 aa).

19–24 is a binding site for ATP; that stretch reads GAGKTT. Thr-23 is a binding site for Mg(2+). Substrate is bound by residues Asp-41, Arg-65, and Gly-87. An ATP-binding site is contributed by Arg-125. Arg-144 provides a ligand contact to substrate.

Belongs to the shikimate kinase family. Monomer. Mg(2+) is required as a cofactor.

It is found in the cytoplasm. The enzyme catalyses shikimate + ATP = 3-phosphoshikimate + ADP + H(+). It functions in the pathway metabolic intermediate biosynthesis; chorismate biosynthesis; chorismate from D-erythrose 4-phosphate and phosphoenolpyruvate: step 5/7. Functionally, catalyzes the specific phosphorylation of the 3-hydroxyl group of shikimic acid using ATP as a cosubstrate. This is Shikimate kinase from Acinetobacter baylyi (strain ATCC 33305 / BD413 / ADP1).